Reading from the N-terminus, the 276-residue chain is Probable endonuclease 4 (276 aa).

Residues His65, His105, Glu141, Asp175, His178, His210, Asp223, His225, and Glu255 each contribute to the Zn(2+) site.

The protein belongs to the AP endonuclease 2 family. It depends on Zn(2+) as a cofactor.

It carries out the reaction Endonucleolytic cleavage to 5'-phosphooligonucleotide end-products.. Functionally, endonuclease IV plays a role in DNA repair. It cleaves phosphodiester bonds at apurinic or apyrimidinic (AP) sites, generating a 3'-hydroxyl group and a 5'-terminal sugar phosphate. The polypeptide is Probable endonuclease 4 (Symbiobacterium thermophilum (strain DSM 24528 / JCM 14929 / IAM 14863 / T)).